A 228-amino-acid polypeptide reads, in one-letter code: Ribulose-phosphate 3-epimerase (228 aa).

Serine 12 is a substrate binding site. A divalent metal cation is bound by residues histidine 37, aspartate 39, and histidine 70. Aspartate 39 serves as the catalytic Proton acceptor. Residues histidine 70, 146-149 (GFGG), 176-178 (DGG), and 198-199 (GS) contribute to the substrate site. Aspartate 176 serves as a coordination point for a divalent metal cation. The Proton donor role is filled by aspartate 176.

Belongs to the ribulose-phosphate 3-epimerase family. Requires a divalent metal cation as cofactor.

The enzyme catalyses D-ribulose 5-phosphate = D-xylulose 5-phosphate. The protein operates within carbohydrate degradation. Its function is as follows. Catalyzes the reversible epimerization of D-ribulose 5-phosphate to D-xylulose 5-phosphate. The chain is Ribulose-phosphate 3-epimerase from Rhodobacter capsulatus (Rhodopseudomonas capsulata).